We begin with the raw amino-acid sequence, 566 residues long: Mucolipin-2 (566 aa).

The Cytoplasmic segment spans residues 1-65 (MARQPYRFPQ…YRARRQIPWK (65 aa)). Residues 66–86 (LGLQILKIVMVTTQLVRFGLS) form a helical membrane-spanning segment. The Extracellular portion of the chain corresponds to 87 to 288 (NQLVVAFKED…IFGSTQKNAQ (202 aa)). Residues 107-123 (KGYSGTDEDDYSCSVYT) form an extracellular/lumenal pore loop region. Disulfide bonds link cysteine 164/cysteine 190 and cysteine 243/cysteine 274. A helical membrane pass occupies residues 289-309 (YVLVFDAFVIVICLASLILCT). Residues 310-346 (RSIVLALRLRKRFLNFFLEKYKRPVCDTDQWEFINGW) lie on the Cytoplasmic side of the membrane. Residues 347–367 (YVLVIISDLMTIIGSILKMEI) form a helical membrane-spanning segment. The Extracellular segment spans residues 368-376 (KAKNLTNYD). Residues 377-397 (LCSIFLGTSTLLVWVGVIRYL) form a helical membrane-spanning segment. The Cytoplasmic portion of the chain corresponds to 398–419 (GYFQAYNVLILTMQASLPKVLR). The helical transmembrane segment at 420–440 (FCACAGMIYLGYTFCGWIVLG) threads the bilayer. The Extracellular portion of the chain corresponds to 441–448 (PYHDKFEN). Positions 449–469 (LNTVAECLFSLVNGDDMFATF) form an intramembrane region, pore-forming. The Selectivity filter motif lies at 461–464 (NGDD). Over 470 to 480 (AQIQQKSILVW) the chain is Extracellular. Residues 481-502 (LFSRLYLYSFISLFIYMILSLF) traverse the membrane as a helical segment. Over 503 to 566 (IALITDSYDT…RSDDHLIPIS (64 aa)) the chain is Cytoplasmic.

It belongs to the transient receptor (TC 1.A.4) family. Polycystin subfamily. MCOLN2 sub-subfamily. In terms of assembly, forms homooligomeric complexes; probably tetrameric. Can heterooligomerize with MCOLN1; heteromeric assemblies have different channel properties as compared to the respective homooligomers and may be tissue-specific. Interacts with TMEM176A.

It is found in the cell membrane. Its subcellular location is the late endosome membrane. It localises to the lysosome membrane. The protein resides in the recycling endosome membrane. The enzyme catalyses Ca(2+)(in) = Ca(2+)(out). It carries out the reaction Fe(2+)(in) = Fe(2+)(out). Its activity is regulated as follows. Channel activity is reduced by low extracellular/lumenal pH level. Nonselective cation channel probably playing a role in the regulation of membrane trafficking events. Acts as a Ca(2+)-permeable cation channel with inwardly rectifying activity. May activate ARF6 and be involved in the trafficking of GPI-anchored cargo proteins to the cell surface via the ARF6-regulated recycling pathway. May play a role in immune processes. In adaptive immunity, TRPML2 and TRPML1 may play redundant roles in the function of the specialized lysosomes of B cells. In the innate immune response, may play a role in the regulation of chemokine secretion and macrophage migration. Through a possible and probably tissue-specific heteromerization with MCOLN1 may be at least in part involved in many lysosome-dependent cellular events. Also functions as a Fe(2+) permeable channel. This is Mucolipin-2 from Homo sapiens (Human).